Consider the following 165-residue polypeptide: Group 10 secretory phospholipase A2 (165 aa).

The signal sequence occupies residues 1-31 (MGPLPVCLPIMLLLLLPSLLLLLLLPGPGSG). The propeptide occupies 32–42 (EASRILRVHRR). Cystine bridges form between Cys-53-Cys-111, Cys-67-Cys-157, Cys-69-Cys-85, Cys-84-Cys-139, Cys-90-Cys-164, Cys-91-Cys-132, Cys-100-Cys-125, and Cys-118-Cys-130. Ca(2+) contacts are provided by Phe-68, Gly-70, and Gly-72. His-88 is an active-site residue. Asp-89 contributes to the Ca(2+) binding site. Residue Asn-113 is glycosylated (N-linked (GlcNAc...) asparagine). Asp-133 is a catalytic residue.

The protein belongs to the phospholipase A2 family. In terms of assembly, interacts with PLA2R1; this interaction mediates PLA2G10 clearance and inactivation. The cofactor is Ca(2+). Found in spleen, thymus, peripheral blood leukocytes, pancreas, lung, and colon. Expressed in neuronal fibers in dorsal root ganglia and in peripheral tissues including stomach, white adipose tissue and prostate (at protein level).

It is found in the secreted. The protein localises to the lysosome. The protein resides in the cytoplasmic vesicle. It localises to the secretory vesicle. Its subcellular location is the acrosome. It catalyses the reaction a 1,2-diacyl-sn-glycero-3-phosphocholine + H2O = a 1-acyl-sn-glycero-3-phosphocholine + a fatty acid + H(+). The catalysed reaction is 1-hexadecanoyl-2-(9Z-octadecenoyl)-sn-glycero-3-phosphocholine + H2O = 1-hexadecanoyl-sn-glycero-3-phosphocholine + (9Z)-octadecenoate + H(+). It carries out the reaction 1-octadecanoyl-2-(5Z,8Z,11Z,14Z-eicosatetraenoyl)-sn-glycero-3-phosphocholine + H2O = 1-octadecanoyl-sn-glycero-3-phosphocholine + (5Z,8Z,11Z,14Z)-eicosatetraenoate + H(+). The enzyme catalyses 1,2-dihexadecanoyl-sn-glycero-3-phosphocholine + H2O = 1-hexadecanoyl-sn-glycero-3-phosphocholine + hexadecanoate + H(+). It catalyses the reaction 1-hexadecanoyl-2-(9Z-octadecenoyl)-sn-glycero-3-phosphoglycerol + H2O = 1-hexadecanoyl-sn-glycero-3-phosphoglycerol + (9Z)-octadecenoate + H(+). The catalysed reaction is 1,2-dihexadecanoyl-sn-glycero-3-phospho-(1'-sn-glycerol) + H2O = 1-hexadecanoyl-sn-glycero-3-phospho-(1'-sn-glycerol) + hexadecanoate + H(+). It carries out the reaction 1-hexadecanoyl-2-(9Z-octadecenoyl)-sn-glycero-3-phospho-L-serine + H2O = 1-hexadecanoyl-sn-glycero-3-phospho-L-serine + (9Z)-octadecenoate + H(+). The enzyme catalyses 1-hexadecanoyl-2-(9Z,12Z-octadecadienoyl)-sn-glycero-3-phosphoethanolamine + H2O = 1-hexadecanoyl-sn-glycero-3-phosphoethanolamine + (9Z,12Z)-octadecadienoate + H(+). It catalyses the reaction 1-hexadecanoyl-2-(9Z-octadecenoyl)-sn-glycero-3-phosphate + H2O = 1-hexadecanoyl-sn-glycero-3-phosphate + (9Z)-octadecenoate + H(+). The catalysed reaction is 1-O-hexadecyl-2-acetyl-sn-glycero-3-phosphocholine + H2O = 1-O-hexadecyl-sn-glycero-3-phosphocholine + acetate + H(+). Inhibited by methyl indoxam. In terms of biological role, secretory calcium-dependent phospholipase A2 that primarily targets extracellular phospholipids. Hydrolyzes the ester bond of the fatty acyl group attached at sn-2 position of phospholipids with preference for phosphatidylcholines and phosphatidylglycerols over phosphatidylethanolamines. Preferentially releases sn-2 omega-6 and omega-3 polyunsaturated fatty acyl (PUFA) chains over saturated fatty acyls. Contributes to phospholipid remodeling of very low-density lipoprotein (VLDL), low-density lipoprotein (LDL) and high-density lipoprotein (HDL) particles. Hydrolyzes LDL phospholipids releasing unsaturated fatty acids that regulate macrophage differentiation toward foam cells. Efficiently hydrolyzes and inactivates platelet activating factor (PAF), a potent lipid mediator present in oxidized LDL. May act in an autocrine and paracrine manner. Secreted by lung epithelium, targets membrane phospholipids of infiltrating eosinophils, releasing arachidonate and boosting eicosanoid and cysteinyl leukotriene synthesis involved in airway inflammatory response. Secreted by gut epithelium, hydrolyzes dietary and biliary phosphatidylcholines in the gastrointestinal lumen. Plays a stem cell regulator role in colon epithelium. Within intracellular compartment, mediates Paneth-like cell differentiation and its stem cell supporting functions by inhibiting the Wnt signaling pathway in intestinal stem cell (ISC). Secreted in the intestinal lumen upon inflammation, acts in an autocrine way and promotes prostaglandin E2 synthesis that stimulates Wnt signaling pathway in ISCs and tissue regeneration. May participate in hair follicle morphogenesis by regulating phosphatidylethanolamines metabolism at the outermost epithelial layer and facilitating melanin synthesis. By releasing lysophosphatidylcholines (LPCs) at sperm acrosome, controls sperm cell capacitation, acrosome reaction and overall fertility. May promote neurite outgrowth in neuron fibers involved in nociception. Contributes to lipid remodeling of cellular membranes and generation of lipid mediators involved in pathogen clearance. Cleaves sn-2 fatty acyl chains of phosphatidylglycerols and phosphatidylethanolamines, which are major components of membrane phospholipids in bacteria. Displays bactericidal activity against Gram-positive bacteria by directly hydrolyzing phospholipids of the bacterial membrane. In pulmonary epithelium, may contribute to host defense response against adenoviral infection. Prevents adenovirus entry into host cells by hydrolyzing host cell plasma membrane, releasing C16:0 LPCs that inhibit virus-mediated membrane fusion and viral infection. Likely prevents adenoviral entry into the endosomes of host cells. May play a role in maturation and activation of innate immune cells including macrophages, group 2 innate lymphoid cells and mast cells. This is Group 10 secretory phospholipase A2 (PLA2G10) from Homo sapiens (Human).